Consider the following 385-residue polypeptide: UPF0496 protein At3g28290 (385 aa).

A coiled-coil region spans residues 138-214 (KDKENDVGKK…IEMEISSRKK (77 aa)). Helical transmembrane passes span 217–237 (IISN…SMVL) and 242–262 (VGAG…IGWV). Positions 267-294 (ILENKIQAREKQEEALKKAHRIANEMDK) form a coiled coil.

It belongs to the UPF0496 family. As to expression, widely expressed.

The protein localises to the membrane. This is UPF0496 protein At3g28290 from Arabidopsis thaliana (Mouse-ear cress).